A 263-amino-acid polypeptide reads, in one-letter code: MTKPPPFPEPDDSETADERQFFAQQKTRKLDTVATLGGTGEAHYHGHRDRLRARYREQGDAALADYDILELILFRLIPRRDTKPIAKELLARFGTLSGVFGAPQHLLQEVKGVGEAVALDLKLIATAAQRTLKSELRNKQVLSSWSAVIDYCHAAMAHETKEQFRILFLDKRNALIADEVQQQGTIDHTPVYPREVVKRALELSATALILAHNHPSGDPTPSRADIEMTKLIAEAAKPLGITVHDHVIIGKDGHVSMKGLRLF.

One can recognise an MPN domain in the interval 141–263 (VLSSWSAVID…HVSMKGLRLF (123 aa)). Zn(2+) contacts are provided by His212, His214, and Asp225. Residues 212–225 (HNHPSGDPTPSRAD) carry the JAMM motif motif.

It belongs to the UPF0758 family.

This Sinorhizobium fredii (strain NBRC 101917 / NGR234) protein is UPF0758 protein NGR_c13970.